Here is a 336-residue protein sequence, read N- to C-terminus: Fructose-1,6-bisphosphatase class 1 (336 aa).

Residues Glu-90, Asp-112, Leu-114, and Asp-115 each contribute to the Mg(2+) site. Substrate contacts are provided by residues 115–118 (DGSS), Asn-207, and Lys-273. Glu-279 contacts Mg(2+).

The protein belongs to the FBPase class 1 family. As to quaternary structure, homotetramer. It depends on Mg(2+) as a cofactor.

It is found in the cytoplasm. The enzyme catalyses beta-D-fructose 1,6-bisphosphate + H2O = beta-D-fructose 6-phosphate + phosphate. The protein operates within carbohydrate biosynthesis; gluconeogenesis. The chain is Fructose-1,6-bisphosphatase class 1 from Xanthomonas euvesicatoria pv. vesicatoria (strain 85-10) (Xanthomonas campestris pv. vesicatoria).